A 154-amino-acid chain; its full sequence is Urease accessory protein UreE (154 aa).

This sequence belongs to the UreE family.

The protein localises to the cytoplasm. Its function is as follows. Involved in urease metallocenter assembly. Binds nickel. Probably functions as a nickel donor during metallocenter assembly. This is Urease accessory protein UreE from Rhizobium meliloti (strain 1021) (Ensifer meliloti).